The primary structure comprises 757 residues: Xaa-Pro dipeptidyl-peptidase (757 aa).

Catalysis depends on charge relay system residues serine 348, aspartate 468, and histidine 498.

This sequence belongs to the peptidase S15 family. As to quaternary structure, homodimer.

Its subcellular location is the cytoplasm. It catalyses the reaction Hydrolyzes Xaa-Pro-|- bonds to release unblocked, N-terminal dipeptides from substrates including Ala-Pro-|-p-nitroanilide and (sequentially) Tyr-Pro-|-Phe-Pro-|-Gly-Pro-|-Ile.. Its function is as follows. Removes N-terminal dipeptides sequentially from polypeptides having unsubstituted N-termini provided that the penultimate residue is proline. This Streptococcus pneumoniae (strain ATCC 700669 / Spain 23F-1) protein is Xaa-Pro dipeptidyl-peptidase.